A 909-amino-acid chain; its full sequence is Cutinase transcription factor 1 alpha (909 aa).

A disordered region spans residues 1 to 51; it reads MSSGDAPPQAQPQPHQQEQPNQRQSSTPAPSAAPVPPAPSTSTSNSAGGVS. Low complexity predominate over residues 12-30; the sequence is PQPHQQEQPNQRQSSTPAP. The zn(2)-C6 fungal-type DNA-binding region spans 61 to 90; that stretch reads CETCHARKVRCDAASLGVPCTNCVAFQIEC. Disordered regions lie at residues 95–159, 651–757, and 841–878; these read PKRK…EAQA, AEGK…SFSV, and LPQGFQGHTNMWQPNLDPNLPEGQSPDSWSSTSGQGQA. The span at 110 to 119 shows a compositional bias: basic and acidic residues; it reads KDSDSDRGDG. The span at 142–156 shows a compositional bias: polar residues; sequence VFHSHNGTPPTTLTE. Positions 669–683 are enriched in basic and acidic residues; the sequence is QHSRQQEAPKRKYDE. 3 stretches are compositionally biased toward polar residues: residues 704–717, 737–755, and 865–878; these read PQTPSAVKAETSSM, GGTNSRPQTRPATPFNPSF, and SPDSWSSTSGQGQA.

The protein localises to the nucleus. This chain is Cutinase transcription factor 1 alpha (CTF1-ALPHA), found in Fusarium vanettenii (Neocosmospora pisi).